Consider the following 294-residue polypeptide: UPF0718 protein YcgR (294 aa).

8 helical membrane-spanning segments follow: residues 15-35 (ISIL…SGII), 54-74 (LAVL…CGII), 92-112 (AFML…YIAF), 117-137 (SVVF…GVIL), 174-194 (IDEF…AAAM), 215-235 (LVMM…AFIA), 247-267 (LIAF…MMLA), and 273-293 (FVFL…LLVK).

It belongs to the UPF0718 family.

The protein resides in the cell membrane. The protein is UPF0718 protein YcgR (ycgR) of Bacillus subtilis (strain 168).